The chain runs to 192 residues: Zinc finger CCHC domain-containing protein 10 (192 aa).

The CCHC-type zinc-finger motif lies at 43–60 (VRCQKCLEFGHWTYECTG). A disordered region spans residues 89–192 (QSIGETNVER…DEPPKKKKKK (104 aa)). Composition is skewed to low complexity over residues 109-136 (TSSS…SSSS) and 144-179 (SSSS…STDS).

This Homo sapiens (Human) protein is Zinc finger CCHC domain-containing protein 10 (ZCCHC10).